A 262-amino-acid polypeptide reads, in one-letter code: Expansin-A21 (262 aa).

A signal peptide spans 1–29 (MKLLEKMTYVECFMIIMATWFMFISYSHG). The Expansin-like EG45 domain occupies 64–169 (EGACGYGDLN…RRVPCAKTGG (106 aa)). Residues 179-258 (NILTILPYNV…SWGFGQTFDG (80 aa)) form the Expansin-like CBD domain.

This sequence belongs to the expansin family. Expansin A subfamily.

The protein localises to the secreted. Its subcellular location is the cell wall. It localises to the membrane. Functionally, causes loosening and extension of plant cell walls by disrupting non-covalent bonding between cellulose microfibrils and matrix glucans. No enzymatic activity has been found. The chain is Expansin-A21 (EXPA21) from Arabidopsis thaliana (Mouse-ear cress).